The sequence spans 253 residues: uncharacterized protein (253 aa).

Positions 1 to 19 (MRYLKKVTIYISLLILVSG) are cleaved as a signal peptide. Cysteine 20 is lipidated: N-palmitoyl cysteine. The S-diacylglycerol cysteine moiety is linked to residue cysteine 20.

This sequence belongs to the staphylococcal tandem lipoprotein family.

Its subcellular location is the cell membrane. This is an uncharacterized protein from Staphylococcus epidermidis (strain ATCC 35984 / DSM 28319 / BCRC 17069 / CCUG 31568 / BM 3577 / RP62A).